The primary structure comprises 376 residues: UPF0754 membrane protein Sca_1420 (376 aa).

A run of 2 helical transmembrane segments spans residues 4–24 (FLVI…TNII) and 356–376 (LLGF…ALFV).

It belongs to the UPF0754 family.

The protein resides in the cell membrane. In Staphylococcus carnosus (strain TM300), this protein is UPF0754 membrane protein Sca_1420.